The sequence spans 504 residues: 6,7,8-trihydroxycoumarin synthase (504 aa).

The chain crosses the membrane as a helical span at residues 1–21 (MEPVFLFLILAFPIASVYLLF). A substrate specificity region spans residues 363-368 (PAPVLV). C444 is a binding site for heme.

Belongs to the cytochrome P450 family. Heme serves as cofactor.

Its subcellular location is the microsome membrane. It functions in the pathway secondary metabolite biosynthesis. Functionally, involved in the biosynthesis of coumarins and furanocoumarins (FCs), natural products required for defense responses against attacks by predators with potential medical and agroindustrial usages such as anticoagulant, rodenticide and artificial vanilla substitutes. Able to catalyze the hydroxylation of esculetin to produce 6,7,8-trihydroxycoumarin. The sequence is that of 6,7,8-trihydroxycoumarin synthase from Pastinaca sativa (Wild parsnip).